A 428-amino-acid chain; its full sequence is Tyrosine--tRNA ligase (428 aa).

Tyr41 provides a ligand contact to L-tyrosine. A 'HIGH' region motif is present at residues Pro46 to His55. Residues Tyr179 and Gln183 each contribute to the L-tyrosine site. Residues Lys239–Thr243 carry the 'KMSKS' region motif. Lys242 contacts ATP. The region spanning Ala361–Gly418 is the S4 RNA-binding domain.

The protein belongs to the class-I aminoacyl-tRNA synthetase family. TyrS type 1 subfamily. In terms of assembly, homodimer.

The protein localises to the cytoplasm. It carries out the reaction tRNA(Tyr) + L-tyrosine + ATP = L-tyrosyl-tRNA(Tyr) + AMP + diphosphate + H(+). In terms of biological role, catalyzes the attachment of tyrosine to tRNA(Tyr) in a two-step reaction: tyrosine is first activated by ATP to form Tyr-AMP and then transferred to the acceptor end of tRNA(Tyr). The protein is Tyrosine--tRNA ligase of Klebsiella pneumoniae subsp. pneumoniae (strain ATCC 700721 / MGH 78578).